A 294-amino-acid polypeptide reads, in one-letter code: tRNA dimethylallyltransferase (294 aa).

An ATP-binding site is contributed by 10 to 17 (GPTAVGKT). Position 12-17 (12-17 (TAVGKT)) interacts with substrate. Residues 35 to 38 (DSQQ) are interaction with substrate tRNA.

This sequence belongs to the IPP transferase family. Monomer. The cofactor is Mg(2+).

It carries out the reaction adenosine(37) in tRNA + dimethylallyl diphosphate = N(6)-dimethylallyladenosine(37) in tRNA + diphosphate. In terms of biological role, catalyzes the transfer of a dimethylallyl group onto the adenine at position 37 in tRNAs that read codons beginning with uridine, leading to the formation of N6-(dimethylallyl)adenosine (i(6)A). In Streptococcus pneumoniae (strain Taiwan19F-14), this protein is tRNA dimethylallyltransferase.